Reading from the N-terminus, the 966-residue chain is MLRAGSVVTCIACKGLLPSRMGVKFRVPLQKLHPLSRAIHHRYSANNNPQRPPHCSAARHYTSLSRLPMRPPKSRSGGHGYQQHRTFWVARLAARLLKLRYILLGSAVGGGYTAKKTYDEWKEMLPDMSEYTWIVPDFVWELSENIDLDKLASALPELEEIAKLLPDMEKIGENFTFLKSLLSSETTGESALRAPDVPPASAAMADSGDKQFKKSSDKEKVDQLQEELLRTQLKYQRMLERLEKENKELRKVVLQKDDKGIHQRKVKKSLIDMYSEVLDILSDYDSNYNTQDHLPRVVVVGDQSAGKTSVLEMIAQARIFPRGSGEMMTRSPVKVTLSEGPHHVAMFKDSSREFDLGKEEDLAALRHEIELRMRKSVKEGQTVSPETISLSVKGPGIQRMVLVDLPGVISTVTTGMAADTKETIFSISKAYMQNPNAIILCIQDGSVDAERSIVTDLVSQMDPQGKRTIFVLTKVDLAEKNLASPSRIQQIVEGKLFPMKALGYFAVVTGKGSPNESIDSIKDYEEDFFQNSRLLKDGMLKAHQVTTKNLSLAVSDCFWKMVRESVEQQADAFKASRFNLETEWKNNYPRLRELDRNELYEKAKNEILDEVISLSQVTPKHWESILQKKLWERVSTHVIENIYLPAAQTMNSGTFNTTVDIKLKQWTDKQLPHKALEVAWETLQEEFARFMAEYKGKDQDDIFDKLKEAVKDESIKRHKWNERAMDSLRVIQHNALEDRSITDKPQWDAAIQFMEETLQSRLKDTESVIADMVGPDWKQRWMSWKNRTPEQHTRNETKNELERLLKLHEDHTAYLANDEVTTVRKNLEARGVEVDPVLIKDTWHQLFRRHFLQKALLHCNLCRRGFYYYQRHFVDSELECNDVVLFWRIQRMLGITANTLRQQLTNTEVRRLEKNVKEVLEDFGEDNEKKVQLITGRRVQLAEDLKKVREIQEKLEAFIEALHKEK.

A mitochondrion-targeting transit peptide spans Met-1 to Thr-86. The Mitochondrial matrix segment spans residues Phe-87–Arg-95. The chain crosses the membrane as a helical span at residues Leu-96–Tyr-112. Over Thr-113–Asp-776 the chain is Mitochondrial intermembrane. The disordered stretch occupies residues Glu-189–Asp-217. A compositionally biased stretch (basic and acidic residues) spans Ser-207–Asp-217. Positions Lys-213 to Lys-259 form a coiled coil. In terms of domain architecture, Dynamin-type G spans Gln-291–Glu-567. The segment at Gly-301 to Thr-308 is G1 motif. The GTP site is built by Ser-304, Gly-306, Lys-307, Thr-308, Ser-309, and Gly-323. Thr-308 contacts Mg(2+). Positions Met-327–Arg-330 are G2 motif. The Mg(2+) site is built by Thr-329 and Asp-404. The G3 motif stretch occupies residues Asp-404–Gly-407. The segment at Thr-473–Asp-476 is G4 motif. Lys-474, Asp-476, and Thr-509 together coordinate GTP. The interval Val-507 to Gly-510 is G5 motif. Stalk region stretches follow at residues Asp-595–Thr-842 and Cys-880–Ile-934. The tract at residues Thr-742–Cys-862 is paddle region. An intramembrane segment occupies Trp-777–Arg-787. Residues Thr-788–Lys-966 lie on the Mitochondrial intermembrane side of the membrane. An intrachain disulfide couples Cys-862 to Cys-880. Residues Arg-901–Lys-966 adopt a coiled-coil conformation.

Belongs to the TRAFAC class dynamin-like GTPase superfamily. Dynamin/Fzo/YdjA family. As to quaternary structure, oligomeric complex consisting of membrane-bound and soluble forms of OPA1. Cleaved by OMA1 or YME1L downstream of the transmembrane region in response to different signals to generate soluble forms. Cleaved by OMA1 at position S1 following stress conditions, generating the short soluble form (Dynamin-like GTPase OPA1, short form; S-OPA1).

The protein resides in the mitochondrion inner membrane. The protein localises to the mitochondrion intermembrane space. It catalyses the reaction GTP + H2O = GDP + phosphate + H(+). In terms of biological role, dynamin-related GTPase that is essential for normal mitochondrial morphology by mediating fusion of the mitochondrial inner membranes, regulating cristae morphology and maintaining respiratory chain function. Exists in two forms: the transmembrane, long form (Dynamin-like GTPase OPA1, long form; L-OPA1), which is tethered to the inner mitochondrial membrane, and the short soluble form (Dynamin-like GTPase OPA1, short form; S-OPA1), which results from proteolytic cleavage and localizes in the intermembrane space. Both forms (L-OPA1 and S-OPA1) cooperate to catalyze the fusion of the mitochondrial inner membrane. The equilibrium between L-OPA1 and S-OPA1 is essential: excess levels of S-OPA1, produced by cleavage by OMA1 following loss of mitochondrial membrane potential, lead to an impaired equilibrium between L-OPA1 and S-OPA1, inhibiting mitochondrial fusion. The balance between L-OPA1 and S-OPA1 also influences cristae shape and morphology. Its role in mitochondrial morphology is required for mitochondrial genome maintenance. Its function is as follows. Constitutes the transmembrane long form (L-OPA1) that plays a central role in mitochondrial inner membrane fusion and cristae morphology. L-OPA1 and the soluble short form (S-OPA1) form higher-order helical assemblies that coordinate the fusion of mitochondrial inner membranes. Inner membrane-anchored L-OPA1 molecules initiate membrane remodeling by recruiting soluble S-OPA1 to rapidly polymerize into a flexible cylindrical scaffold encaging the mitochondrial inner membrane. Once at the membrane surface, the formation of S-OPA1 helices induce bilayer curvature. OPA1 dimerization through the paddle region, which inserts into cardiolipin-containing membrane, promotes GTP hydrolysis and the helical assembly of a flexible OPA1 lattice on the membrane, which drives membrane curvature and mitochondrial fusion. Plays a role in the maintenance and remodeling of mitochondrial cristae, some invaginations of the mitochondrial inner membrane that provide an increase in the surface area. Probably acts by forming helical filaments at the inside of inner membrane tubes with the shape and dimensions of crista junctions. Constitutes the soluble short form (S-OPA1) generated by cleavage by OMA1, which plays a central role in mitochondrial inner membrane fusion and cristae morphology. The transmembrane long form (L-OPA1) and the S-OPA1 form higher-order helical assemblies that coordinate the fusion of mitochondrial inner membranes. Inner membrane-anchored L-OPA1 molecules initiate membrane remodeling by recruiting soluble S-OPA1 to rapidly polymerize into a flexible cylindrical scaffold encaging the mitochondrial inner membrane. Once at the membrane surface, the formation of S-OPA1 helices induce bilayer curvature. OPA1 dimerization through the paddle region, which inserts into cardiolipin-containing membrane, promotes GTP hydrolysis and the helical assembly of a flexible OPA1 lattice on the membrane, which drives membrane curvature and mitochondrial fusion. Excess levels of S-OPA1 produced by cleavage by OMA1 following stress conditions that induce loss of mitochondrial membrane potential, lead to an impaired equilibrium between L-OPA1 and S-OPA1, thereby inhibiting mitochondrial fusion. Plays a role in the maintenance and remodeling of mitochondrial cristae, some invaginations of the mitochondrial inner membrane that provide an increase in the surface area. Probably acts by forming helical filaments at the inside of inner membrane tubes with the shape and dimensions of crista junctions. In Danio rerio (Zebrafish), this protein is Dynamin-like GTPase OPA1, mitochondrial.